We begin with the raw amino-acid sequence, 465 residues long: Cysteine--tRNA ligase (465 aa).

Zn(2+) is bound at residue Cys-27. The 'HIGH' region motif lies at 29 to 39 (PTVYDEVHIGH). Zn(2+) is bound by residues Cys-204, His-229, and Glu-233. The 'KMSKS' region motif lies at 261 to 265 (KMSKS). An ATP-binding site is contributed by Lys-264.

The protein belongs to the class-I aminoacyl-tRNA synthetase family. Zn(2+) is required as a cofactor.

It is found in the cytoplasm. It catalyses the reaction tRNA(Cys) + L-cysteine + ATP = L-cysteinyl-tRNA(Cys) + AMP + diphosphate. This chain is Cysteine--tRNA ligase, found in Metallosphaera sedula (strain ATCC 51363 / DSM 5348 / JCM 9185 / NBRC 15509 / TH2).